We begin with the raw amino-acid sequence, 300 residues long: NAD kinase (300 aa).

Residue D75 is the Proton acceptor of the active site. NAD(+) contacts are provided by residues D75–G76, N149–D150, R177, D179, T190–S195, A214, and Q248.

This sequence belongs to the NAD kinase family. A divalent metal cation is required as a cofactor.

Its subcellular location is the cytoplasm. It catalyses the reaction NAD(+) + ATP = ADP + NADP(+) + H(+). In terms of biological role, involved in the regulation of the intracellular balance of NAD and NADP, and is a key enzyme in the biosynthesis of NADP. Catalyzes specifically the phosphorylation on 2'-hydroxyl of the adenosine moiety of NAD to yield NADP. In Paraburkholderia phymatum (strain DSM 17167 / CIP 108236 / LMG 21445 / STM815) (Burkholderia phymatum), this protein is NAD kinase.